The primary structure comprises 319 residues: Phenoxybenzoate dioxygenase subunit beta (319 aa).

Positions 7–109 (MAPVSLRIHA…DGPSNHFALD (103 aa)) constitute an FAD-binding FR-type domain. 113 to 223 (PHAVFIAGGI…PARVHLEYFA (111 aa)) provides a ligand contact to NAD(+). Residues 234-319 (FVVHLARSGR…SKTAELTLDL (86 aa)) enclose the 2Fe-2S ferredoxin-type domain. [2Fe-2S] cluster contacts are provided by cysteine 268, cysteine 273, cysteine 276, and cysteine 306.

It belongs to the PDR/VanB family. In terms of assembly, this dioxygenase system consists of two proteins: the alpha subunit (PobA) and a subunit (PobB) that acts as a ferredoxin and a ferredoxin reductase. FMN is required as a cofactor.

The protein operates within aromatic compound metabolism; carboxydiphenyl ether degradation. In terms of biological role, degrades exclusively diarylether compounds having carboxyl groups in the 3- or 4-position. Yields a hemiacetal that spontaneously hydrolyzes to phenol and protocatechuate. In Ectopseudomonas oleovorans (Pseudomonas oleovorans), this protein is Phenoxybenzoate dioxygenase subunit beta (pobB).